The primary structure comprises 131 residues: EG45-like domain containing protein (131 aa).

The N-terminal stretch at 1–24 is a signal peptide; sequence MGVGTKVLVITTMAICLISSAAYA. In terms of domain architecture, Expansin-like EG45; incomplete spans 27–131; sequence GTATFYTPPY…GKIKIEFNQA (105 aa). An intrachain disulfide couples cysteine 73 to cysteine 85.

As to expression, expressed in the outer layer of xylem and the vascular cambial zone of roots, in shoot cambium, but not in leaves.

Its subcellular location is the secreted. In terms of biological role, might have a systemic role in water and solute homeostasis. Has no expansin-like activity. The polypeptide is EG45-like domain containing protein (CjBAp12) (Citrus jambhiri (Rough lemon)).